Consider the following 872-residue polypeptide: Protein translocase subunit SecA (872 aa).

Residues Gln87, 105-109, and Asp500 contribute to the ATP site; that span reads GEGKT. Residues Cys855, Cys857, Cys866, and His867 each coordinate Zn(2+).

The protein belongs to the SecA family. Monomer and homodimer. Part of the essential Sec protein translocation apparatus which comprises SecA, SecYEG and auxiliary proteins SecDF-YajC and YidC. Zn(2+) is required as a cofactor.

The protein resides in the cell inner membrane. Its subcellular location is the cytoplasm. The enzyme catalyses ATP + H2O + cellular proteinSide 1 = ADP + phosphate + cellular proteinSide 2.. Functionally, part of the Sec protein translocase complex. Interacts with the SecYEG preprotein conducting channel. Has a central role in coupling the hydrolysis of ATP to the transfer of proteins into and across the cell membrane, serving both as a receptor for the preprotein-SecB complex and as an ATP-driven molecular motor driving the stepwise translocation of polypeptide chains across the membrane. In Anaplasma marginale (strain St. Maries), this protein is Protein translocase subunit SecA.